Consider the following 413-residue polypeptide: Peptidase T (413 aa).

A Zn(2+)-binding site is contributed by H81. D83 is a catalytic residue. D143 contributes to the Zn(2+) binding site. The active-site Proton acceptor is E178. Zn(2+) contacts are provided by E179, D201, and H383.

The protein belongs to the peptidase M20B family. Zn(2+) is required as a cofactor.

It is found in the cytoplasm. The catalysed reaction is Release of the N-terminal residue from a tripeptide.. Cleaves the N-terminal amino acid of tripeptides. This chain is Peptidase T, found in Lactococcus lactis subsp. hordniae.